We begin with the raw amino-acid sequence, 1140 residues long: Eukaryotic translation initiation factor 3 subunit A (1140 aa).

The PCI domain occupies 319 to 501 (LQRMAAHVLL…NSIYFGTDLT (183 aa)). 2 stretches are compositionally biased toward basic and acidic residues: residues 588–623 (QNNAREEEEARRQEEESRKAKLAEQKRLEQEQEERE) and 829–899 (AAEE…RGGD). 2 disordered regions span residues 588–630 (QNNA…HQNE) and 829–1140 (AAEE…VKRR). Phosphoserine is present on S908. Basic and acidic residues-rich tracts occupy residues 920–976 (ERND…EPDS), 990–1051 (SRDD…EPQR), 1059–1086 (DAPRHADRETRRPAERRDRDVRETRGDQ), and 1109–1130 (TREEKPAAKRDQAQEKENKAGD).

The protein belongs to the eIF-3 subunit A family. As to quaternary structure, component of the eukaryotic translation initiation factor 3 (eIF-3) complex. The eIF-3 complex interacts with pix.

It localises to the cytoplasm. Functionally, RNA-binding component of the eukaryotic translation initiation factor 3 (eIF-3) complex, which is involved in protein synthesis of a specialized repertoire of mRNAs and, together with other initiation factors, stimulates binding of mRNA and methionyl-tRNAi to the 40S ribosome. The eIF-3 complex specifically targets and initiates translation of a subset of mRNAs involved in cell proliferation. The chain is Eukaryotic translation initiation factor 3 subunit A from Drosophila melanogaster (Fruit fly).